A 98-amino-acid polypeptide reads, in one-letter code: Small ribosomal subunit protein uS19 (98 aa).

It belongs to the universal ribosomal protein uS19 family.

In terms of biological role, protein S19 forms a complex with S13 that binds strongly to the 16S ribosomal RNA. The polypeptide is Small ribosomal subunit protein uS19 (Chlorobaculum parvum (strain DSM 263 / NCIMB 8327) (Chlorobium vibrioforme subsp. thiosulfatophilum)).